A 161-amino-acid chain; its full sequence is 2-C-methyl-D-erythritol 2,4-cyclodiphosphate synthase (161 aa).

Asp10 and His12 together coordinate a divalent metal cation. 4-CDP-2-C-methyl-D-erythritol 2-phosphate contacts are provided by residues 10 to 12 (DVH) and 36 to 37 (HS). His44 contributes to the a divalent metal cation binding site. Residues 58-60 (DIG), 63-67 (FPDTD), 102-108 (AQAPKML), 134-137 (TTTE), Phe141, and Arg144 each bind 4-CDP-2-C-methyl-D-erythritol 2-phosphate.

The protein belongs to the IspF family. As to quaternary structure, homotrimer. Requires a divalent metal cation as cofactor.

It carries out the reaction 4-CDP-2-C-methyl-D-erythritol 2-phosphate = 2-C-methyl-D-erythritol 2,4-cyclic diphosphate + CMP. The protein operates within isoprenoid biosynthesis; isopentenyl diphosphate biosynthesis via DXP pathway; isopentenyl diphosphate from 1-deoxy-D-xylulose 5-phosphate: step 4/6. Involved in the biosynthesis of isopentenyl diphosphate (IPP) and dimethylallyl diphosphate (DMAPP), two major building blocks of isoprenoid compounds. Catalyzes the conversion of 4-diphosphocytidyl-2-C-methyl-D-erythritol 2-phosphate (CDP-ME2P) to 2-C-methyl-D-erythritol 2,4-cyclodiphosphate (ME-CPP) with a corresponding release of cytidine 5-monophosphate (CMP). This Shewanella loihica (strain ATCC BAA-1088 / PV-4) protein is 2-C-methyl-D-erythritol 2,4-cyclodiphosphate synthase.